The sequence spans 190 residues: Iron-sulfur protein (190 aa).

The 4Fe-4S ferredoxin-type 1 domain occupies 8–36 (VIIYANPDHCLSCHSCELACAVAHSGGHD). Residues Cys17, Cys20, Cys23, Cys27, Cys65, Cys68, Cys73, Cys77, Cys96, Cys99, Cys102, Cys106, Cys133, Cys136, Cys150, and Cys154 each coordinate [4Fe-4S] cluster. 4Fe-4S ferredoxin-type domains lie at 87–116 (GQVQ…VRSE) and 133–164 (CDLC…MVDL).

In terms of biological role, the carbon monoxide dehydrogenase (CODH) oxidizes carbon monoxide coupled, via CooF, to the reduction of a hydrogen cation by a hydrogenase (probably CooH). CooF is required in stoichiometric amounts in vitro for anchoring CODH to the membrane as well as for conveying the electrons to the hydrogenase. The chain is Iron-sulfur protein (cooF) from Rhodospirillum rubrum.